The primary structure comprises 343 residues: S-adenosylmethionine:tRNA ribosyltransferase-isomerase (343 aa).

The protein belongs to the QueA family. As to quaternary structure, monomer.

Its subcellular location is the cytoplasm. The enzyme catalyses 7-aminomethyl-7-carbaguanosine(34) in tRNA + S-adenosyl-L-methionine = epoxyqueuosine(34) in tRNA + adenine + L-methionine + 2 H(+). Its pathway is tRNA modification; tRNA-queuosine biosynthesis. In terms of biological role, transfers and isomerizes the ribose moiety from AdoMet to the 7-aminomethyl group of 7-deazaguanine (preQ1-tRNA) to give epoxyqueuosine (oQ-tRNA). The chain is S-adenosylmethionine:tRNA ribosyltransferase-isomerase from Enterococcus faecalis (strain ATCC 700802 / V583).